A 153-amino-acid chain; its full sequence is D-aminoacyl-tRNA deacylase (153 aa).

A Gly-cisPro motif, important for rejection of L-amino acids motif is present at residues 140-141 (GP).

Belongs to the DTD family. Homodimer.

The protein localises to the cytoplasm. The catalysed reaction is glycyl-tRNA(Ala) + H2O = tRNA(Ala) + glycine + H(+). It carries out the reaction a D-aminoacyl-tRNA + H2O = a tRNA + a D-alpha-amino acid + H(+). An aminoacyl-tRNA editing enzyme that deacylates mischarged D-aminoacyl-tRNAs. Also deacylates mischarged glycyl-tRNA(Ala), protecting cells against glycine mischarging by AlaRS. Acts via tRNA-based rather than protein-based catalysis; rejects L-amino acids rather than detecting D-amino acids in the active site. By recycling D-aminoacyl-tRNA to D-amino acids and free tRNA molecules, this enzyme counteracts the toxicity associated with the formation of D-aminoacyl-tRNA entities in vivo and helps enforce protein L-homochirality. The protein is D-aminoacyl-tRNA deacylase of Trichodesmium erythraeum (strain IMS101).